Consider the following 118-residue polypeptide: Small ribosomal subunit protein mS37 (118 aa).

The CHCH domain occupies 42-84; sequence EATCITEMSVMMACWKQNEFRDDACRKEIQGFLDCAARAQEAR. 2 consecutive short sequence motifs (cx9C motif) follow at residues 45-55 and 66-76; these read CITEMSVMMAC and CRKEIQGFLDC. Intrachain disulfides connect Cys45–Cys76 and Cys55–Cys66.

It belongs to the mitochondrion-specific ribosomal protein mS37 family. In terms of assembly, component of the mitochondrial small ribosomal subunit (mt-SSU). Mature mammalian 55S mitochondrial ribosomes consist of a small (28S) and a large (39S) subunit. The 28S small subunit contains a 12S ribosomal RNA (12S mt-rRNA) and 30 different proteins. The 39S large subunit contains a 16S rRNA (16S mt-rRNA), a copy of mitochondrial valine transfer RNA (mt-tRNA(Val)), which plays an integral structural role, and 52 different proteins.

It localises to the mitochondrion. Its subcellular location is the nucleus. In Homo sapiens (Human), this protein is Small ribosomal subunit protein mS37 (CHCHD1).